The chain runs to 504 residues: GTPase Der (504 aa).

The 165-residue stretch at 4 to 168 folds into the EngA-type G 1 domain; the sequence is PVVALVGRPN…QVLAPFAEKM (165 aa). Residues 10-17, 57-61, and 120-123 contribute to the GTP site; these read GRPNVGKS, DTGGI, and NKTD. The span at 168-179 shows a compositional bias: basic and acidic residues; it reads MENADENDRTSE. The interval 168-191 is disordered; the sequence is MENADENDRTSEEEQDEWEQEFDF. Positions 180-191 are enriched in acidic residues; the sequence is EEQDEWEQEFDF. Residues 216–389 enclose the EngA-type G 2 domain; it reads IKIAIVGRPN…SIKEAYACAT (174 aa). GTP is bound by residues 222–229, 269–273, and 334–337; these read GRPNVGKS, DTAGV, and NKWD. One can recognise a KH-like domain in the interval 390–474; sequence QKMTTSLLTR…PIRLLFQEGS (85 aa).

This sequence belongs to the TRAFAC class TrmE-Era-EngA-EngB-Septin-like GTPase superfamily. EngA (Der) GTPase family. As to quaternary structure, associates with the 50S ribosomal subunit.

Its function is as follows. GTPase that plays an essential role in the late steps of ribosome biogenesis. The sequence is that of GTPase Der from Haemophilus influenzae (strain ATCC 51907 / DSM 11121 / KW20 / Rd).